The following is a 1353-amino-acid chain: Tenascin-R (1353 aa).

An N-terminal signal peptide occupies residues 1 to 33; that stretch reads MGTDSENPVLRNVLISFNLLLLGAVLKPFECRL. Residues 132–156 are a coiled coil; sequence SLQELLSRIEMLEREVSMLRDQCNS. N-linked (GlcNAc...) asparagine glycans are attached at residues Asn179 and Asn197. 4 consecutive EGF-like domains span residues 187–198, 234–260, 265–291, and 292–323; these read CICSEGWAGSNC, CPAGCGSRGLCVDGECICEEGFGGEDC, CPRDCSGRGHCDNGTCVCAEGYAGEDC, and GWLRCPNACSGRGVCQDGLCICEDGYGGQDCS. The N-linked (GlcNAc...) asparagine glycan is linked to Asn277. Intrachain disulfides connect Cys296–Cys306 and Cys313–Cys322. 9 Fibronectin type-III domains span residues 327-419, 420-504, 505-594, 595-686, 687-776, 777-863, 864-952, 953-1037, and 1038-1126; these read PPEN…TPQG, LKFK…TLID, GPTQ…TEID, APKN…TELD, SPRD…VRPI, TQLH…TGMD, APKD…AMDA, PLGV…TLLD, and PPTN…GGRV. Residues Asn391, Asn469, and Asn580 are each glycosylated (N-linked (GlcNAc...) asparagine). Residues Asn734, Asn790, Asn872, Asn1031, Asn1041, Asn1256, and Asn1342 are each glycosylated (N-linked (GlcNAc...) asparagine). The Fibrinogen C-terminal domain maps to 1124–1339; the sequence is GRVFANPQDC…FVEMKMRPYN (216 aa).

This sequence belongs to the tenascin family. As to quaternary structure, forms homodimers and homotrimers. Interacts with CNTN1, NFASC and CSPG5. Brain specific.

The protein localises to the secreted. The protein resides in the extracellular space. It localises to the extracellular matrix. In terms of biological role, neural extracellular matrix (ECM) protein involved in interactions with different cells and matrix components. Involved in cell attachment and neurite formation. Interaction with CNTN1 enhances the neurite outgrowth. The polypeptide is Tenascin-R (TNR) (Gallus gallus (Chicken)).